The sequence spans 158 residues: 6,7-dimethyl-8-ribityllumazine synthase (158 aa).

5-amino-6-(D-ribitylamino)uracil-binding positions include F23, 61 to 63 (SFE), and 85 to 87 (AVI). 90–91 (DT) is a (2S)-2-hydroxy-3-oxobutyl phosphate binding site. Catalysis depends on H93, which acts as the Proton donor. Residue F118 coordinates 5-amino-6-(D-ribitylamino)uracil. R132 is a binding site for (2S)-2-hydroxy-3-oxobutyl phosphate.

This sequence belongs to the DMRL synthase family.

It catalyses the reaction (2S)-2-hydroxy-3-oxobutyl phosphate + 5-amino-6-(D-ribitylamino)uracil = 6,7-dimethyl-8-(1-D-ribityl)lumazine + phosphate + 2 H2O + H(+). The protein operates within cofactor biosynthesis; riboflavin biosynthesis; riboflavin from 2-hydroxy-3-oxobutyl phosphate and 5-amino-6-(D-ribitylamino)uracil: step 1/2. In terms of biological role, catalyzes the formation of 6,7-dimethyl-8-ribityllumazine by condensation of 5-amino-6-(D-ribitylamino)uracil with 3,4-dihydroxy-2-butanone 4-phosphate. This is the penultimate step in the biosynthesis of riboflavin. The protein is 6,7-dimethyl-8-ribityllumazine synthase of Prochlorococcus marinus (strain NATL1A).